The chain runs to 273 residues: Probable cysteine-rich repeat secretory protein 6 (273 aa).

Residues Met1–Ser21 form the signal peptide. Gnk2-homologous domains are found at residues Gln22 to Phe122 and Asp128 to Leu241.

It belongs to the cysteine-rich repeat secretory protein family.

It is found in the secreted. This chain is Probable cysteine-rich repeat secretory protein 6 (CRRSP6), found in Arabidopsis thaliana (Mouse-ear cress).